Consider the following 400-residue polypeptide: Diphosphomevalonate decarboxylase (400 aa).

(R)-5-diphosphomevalonate contacts are provided by residues Y19–K22, R75, S154–R159, and T210. A disordered region spans residues D381 to K400.

Belongs to the diphosphomevalonate decarboxylase family.

It catalyses the reaction (R)-5-diphosphomevalonate + ATP = isopentenyl diphosphate + ADP + phosphate + CO2. It participates in isoprenoid biosynthesis; isopentenyl diphosphate biosynthesis via mevalonate pathway; isopentenyl diphosphate from (R)-mevalonate: step 3/3. Diphosphomevalonate decarboxylase; part of the second module of ergosterol biosynthesis pathway that includes the middle steps of the pathway. The second module involves the formation of farnesyl diphosphate, which is also an important intermediate in the biosynthesis of ubiquinone, dolichol, heme and prenylated proteins. This module also plays a key role in the biosynthesis of triterpenes such as ganoderic acids (GA), a group of highly oxygenated lanostane-type triterpenoids which are well recognized as a main group of unique bioactive compounds in the medicinal mushroom Ganoderma lucidum. Activity by the mevalonate kinase first converts mevalonate into 5-phosphomevalonate. 5-phosphomevalonate is then further converted to 5-diphosphomevalonate by the phosphomevalonate kinase. The diphosphomevalonate decarboxylase MVD then produces isopentenyl diphosphate. The isopentenyl-diphosphate delta-isomerase then catalyzes the 1,3-allylic rearrangement of the homoallylic substrate isopentenyl (IPP) to its highly electrophilic allylic isomer, dimethylallyl diphosphate (DMAPP). Finally the farnesyl diphosphate synthase FPS catalyzes the sequential condensation of isopentenyl pyrophosphate with dimethylallyl pyrophosphate, and then with the resultant geranylpyrophosphate to the ultimate product farnesyl pyrophosphate. This chain is Diphosphomevalonate decarboxylase, found in Ganoderma lucidum (Ling zhi medicinal fungus).